The following is a 1401-amino-acid chain: DNA-directed RNA polymerase subunit beta' (1401 aa).

Zn(2+)-binding residues include Cys-71, Cys-73, Cys-86, and Cys-89. 3 residues coordinate Mg(2+): Asp-462, Asp-464, and Asp-466. Zn(2+) contacts are provided by Cys-810, Cys-884, Cys-891, and Cys-894. The disordered stretch occupies residues 1377-1401 (RRKGTGAESATPMLADMANDPAAAE).

This sequence belongs to the RNA polymerase beta' chain family. In terms of assembly, the RNAP catalytic core consists of 2 alpha, 1 beta, 1 beta' and 1 omega subunit. When a sigma factor is associated with the core the holoenzyme is formed, which can initiate transcription. Requires Mg(2+) as cofactor. Zn(2+) is required as a cofactor.

The catalysed reaction is RNA(n) + a ribonucleoside 5'-triphosphate = RNA(n+1) + diphosphate. DNA-dependent RNA polymerase catalyzes the transcription of DNA into RNA using the four ribonucleoside triphosphates as substrates. In Rhizobium meliloti (strain 1021) (Ensifer meliloti), this protein is DNA-directed RNA polymerase subunit beta'.